The chain runs to 323 residues: Elongation factor P--(R)-beta-lysine ligase (323 aa).

Position 76-78 (76-78) interacts with substrate; it reads SPE. ATP is bound by residues 100–102 and asparagine 109; that span reads RNE. A substrate-binding site is contributed by tyrosine 118. 242–243 is a binding site for ATP; sequence EL. Glutamate 249 is a binding site for substrate. Glycine 298 lines the ATP pocket.

This sequence belongs to the class-II aminoacyl-tRNA synthetase family. EpmA subfamily. As to quaternary structure, homodimer.

The enzyme catalyses D-beta-lysine + L-lysyl-[protein] + ATP = N(6)-((3R)-3,6-diaminohexanoyl)-L-lysyl-[protein] + AMP + diphosphate + H(+). Its function is as follows. With EpmB is involved in the beta-lysylation step of the post-translational modification of translation elongation factor P (EF-P). Catalyzes the ATP-dependent activation of (R)-beta-lysine produced by EpmB, forming a lysyl-adenylate, from which the beta-lysyl moiety is then transferred to the epsilon-amino group of a conserved specific lysine residue in EF-P. The sequence is that of Elongation factor P--(R)-beta-lysine ligase from Haemophilus influenzae (strain ATCC 51907 / DSM 11121 / KW20 / Rd).